The sequence spans 422 residues: CinA-like protein (422 aa).

Belongs to the CinA family.

In Mycolicibacterium vanbaalenii (strain DSM 7251 / JCM 13017 / BCRC 16820 / KCTC 9966 / NRRL B-24157 / PYR-1) (Mycobacterium vanbaalenii), this protein is CinA-like protein.